The primary structure comprises 504 residues: MKLLEQIEKWAIETPDQTAFVWRDAKITYKQLKEDSDALAHWISSEYPDDRSPIMVYGHMQPEMIINFLGCVKAGHAYIPVDLSIPADRVQRIAENSGAKLLLSGTEVTVTDLPVRIVSEDNLKDIFFTHKGKTPNPEHAVKGDENFYIIYTSGSTGNPKGVQITYNCLVSFTKWAVEDFNLQTGQVFLNQAPFSFDLSVMDIYPSLVTGGTLWAIDKDMIARPKDLFASLEQSDIQVWTSTPSFAEMCLMEASFSESMLPNMKTFLFCGEVLPNEVARKLIERFPKATIMNTYGPTEATVAVTGIHVTEEVLNQYKSLPVGYCKSDCRLLIMKEDGTIAPDGEKGEIVIVGPSVSVGYLGSPELTEKAFTMIDGERAYKTGDAGYVENGLLFYNGRLDFQIKLHGYRMELEEIEHHLRACSYVEGAVIVPIKKGEKYDYLLAVVVPGEHSFEKEFKLTSAIKKELNERLPNYMIPRKFMYQSSIPMTPNGKVDRKKLLSEVTA.

An ATP-binding site is contributed by 152-153 (TS). Position 197 (Asp-197) interacts with D-alanine. 292–297 (NTYGPT) lines the ATP pocket. Val-301 serves as a coordination point for D-alanine. ATP is bound by residues Asp-383, 394 to 397 (YNGR), and Lys-492. Lys-492 is a D-alanine binding site.

This sequence belongs to the ATP-dependent AMP-binding enzyme family. DltA subfamily.

It is found in the cytoplasm. The enzyme catalyses holo-[D-alanyl-carrier protein] + D-alanine + ATP = D-alanyl-[D-alanyl-carrier protein] + AMP + diphosphate. Its pathway is cell wall biogenesis; lipoteichoic acid biosynthesis. Catalyzes the first step in the D-alanylation of lipoteichoic acid (LTA), the activation of D-alanine and its transfer onto the D-alanyl carrier protein (Dcp) DltC. In an ATP-dependent two-step reaction, forms a high energy D-alanyl-AMP intermediate, followed by transfer of the D-alanyl residue as a thiol ester to the phosphopantheinyl prosthetic group of the Dcp. D-alanylation of LTA plays an important role in modulating the properties of the cell wall in Gram-positive bacteria, influencing the net charge of the cell wall. This Bacillus cereus (strain AH187) protein is D-alanine--D-alanyl carrier protein ligase.